We begin with the raw amino-acid sequence, 282 residues long: Trans,polycis-polyprenyl diphosphate synthase ((2Z,6E)-farnesyl diphosphate specific) (282 aa).

The tract at residues 1–30 (MSPKTVFSTDTHREPIPPQPHPSGARPPQL) is disordered. Aspartate 44 is a catalytic residue. Position 44 (aspartate 44) interacts with Mg(2+). Residues 45 to 48 (GNGR), tryptophan 49, arginine 57, histidine 61, and 89 to 91 (STE) contribute to the substrate site. Catalysis depends on asparagine 92, which acts as the Proton acceptor. Substrate is bound by residues tryptophan 93, arginine 95, arginine 212, and 218-220 (RLS). Glutamate 231 provides a ligand contact to Mg(2+). Positions 262–282 (GGAEPNPVGPPQSAAGAQGQD) are disordered.

This sequence belongs to the UPP synthase family. Homodimer. The cofactor is Mg(2+).

The enzyme catalyses (2Z,6E)-farnesyl diphosphate + 10 isopentenyl diphosphate = di-trans,deca-cis-tridecaprenyl diphosphate + 10 diphosphate. It carries out the reaction (2Z,6E)-farnesyl diphosphate + 11 isopentenyl diphosphate = di-trans,undeca-cis-tetradecaprenyl diphosphate + 11 diphosphate. It catalyses the reaction (2Z,6E)-farnesyl diphosphate + 9 isopentenyl diphosphate = di-trans,nona-cis-dodecaprenyl diphosphate + 9 diphosphate. In terms of biological role, catalyzes the synthesis of Z,E-mixed prenyl diphosphates by a condensation of isopentenyl diphosphate to an allylic diphosphate. It shows a large substrate specificity accepting dimethylallyl diphosphate (DMAPP), GPP, E,Efarnesyl diphosphate (FPP), E,E,E-geranylgeranyl diphosphate (GGPP), neryl diphosphate (Z-GPP), and (2Z,6E)-farnesyl diphosphate (Z,E-FPP) as allylic substrates. The enzyme exhibits the highest activity when Z,E-FPP is employed as an allylic substrate. The major product is dodecaprenyl diphosphate (C60) under every allylic substrate conditions, but the enzyme is also able to synthesize even C70 prenyl diphosphate as the maximum chain-length product. The sequence is that of Trans,polycis-polyprenyl diphosphate synthase ((2Z,6E)-farnesyl diphosphate specific) from Thermobifida fusca (strain YX).